The sequence spans 355 residues: Electron transfer flavoprotein subunit alpha, mitochondrial (355 aa).

Leu295 to Asp323 contacts FAD.

The protein belongs to the ETF alpha-subunit/FixB family. In terms of assembly, heterodimer of an alpha and a beta subunit. FAD is required as a cofactor.

The protein resides in the mitochondrion matrix. The electron transfer flavoprotein serves as a specific electron acceptor for several dehydrogenases, including five acyl-CoA dehydrogenases, glutaryl-CoA and sarcosine dehydrogenase. It transfers the electrons to the main mitochondrial respiratory chain via ETF-ubiquinone oxidoreductase (ETF dehydrogenase). The sequence is that of Electron transfer flavoprotein subunit alpha, mitochondrial (etfa) from Dictyostelium discoideum (Social amoeba).